We begin with the raw amino-acid sequence, 129 residues long: Small ribosomal subunit protein uS11 (129 aa).

This sequence belongs to the universal ribosomal protein uS11 family. As to quaternary structure, part of the 30S ribosomal subunit. Interacts with proteins S7 and S18. Binds to IF-3.

Functionally, located on the platform of the 30S subunit, it bridges several disparate RNA helices of the 16S rRNA. Forms part of the Shine-Dalgarno cleft in the 70S ribosome. This is Small ribosomal subunit protein uS11 from Glaesserella parasuis serovar 5 (strain SH0165) (Haemophilus parasuis).